The sequence spans 385 residues: S-adenosylmethionine synthase (385 aa).

His15 is a binding site for ATP. Asp17 lines the Mg(2+) pocket. Residue Glu43 participates in K(+) binding. L-methionine contacts are provided by Glu56 and Gln99. The tract at residues 99 to 109 is flexible loop; sequence QSVDIAQGVDR. ATP is bound by residues 164–166, 230–231, Asp239, 245–246, and Lys266; these read DAK, RF, and RK. Residue Asp239 coordinates L-methionine. Residue Lys270 participates in L-methionine binding.

The protein belongs to the AdoMet synthase family. In terms of assembly, homotetramer; dimer of dimers. Requires Mg(2+) as cofactor. K(+) serves as cofactor.

Its subcellular location is the cytoplasm. It carries out the reaction L-methionine + ATP + H2O = S-adenosyl-L-methionine + phosphate + diphosphate. Its pathway is amino-acid biosynthesis; S-adenosyl-L-methionine biosynthesis; S-adenosyl-L-methionine from L-methionine: step 1/1. Its function is as follows. Catalyzes the formation of S-adenosylmethionine (AdoMet) from methionine and ATP. The overall synthetic reaction is composed of two sequential steps, AdoMet formation and the subsequent tripolyphosphate hydrolysis which occurs prior to release of AdoMet from the enzyme. The chain is S-adenosylmethionine synthase from Alkalilimnicola ehrlichii (strain ATCC BAA-1101 / DSM 17681 / MLHE-1).